Reading from the N-terminus, the 500-residue chain is Replicase polyprotein 1ab (500 aa).

One can recognise a CoV Nsp1 globular domain in the interval Leu-54–Gly-196. A Peptidase C16 domain is found at Ala-352 to Phe-500. The active-site For PL1-PRO activity is Cys-389. Residues Cys-466–Cys-494 form a C4-type zinc finger.

Belongs to the coronaviruses polyprotein 1ab family.

Functionally, the replicase polyprotein of coronaviruses is a multifunctional protein: it contains the activities necessary for the transcription of negative stranded RNA, leader RNA, subgenomic mRNAs and progeny virion RNA as well as proteinases responsible for the cleavage of the polyprotein into functional products. Its function is as follows. The papain-like proteinase 1 (PL1-PRO) is responsible for the cleavages located at the N-terminus of the replicase polyprotein. Activity of PL1-PRO is strongly dependent on zinc. In terms of biological role, non-structural protein 1: binds to the 40S ribosomal subunit and inhibits host translation. The nsp1-40S ribosome complex further induces an endonucleolytic cleavage near the 5'UTR of host mRNAs, targeting them for degradation. By suppressing host gene expression, nsp1 facilitates efficient viral gene expression in infected cells and evasion from host immune response. This is Replicase polyprotein 1ab (rep) from Mus musculus (Mouse).